Consider the following 451-residue polypeptide: Trigger factor (451 aa).

Residues 163-248 (GDIIDMEYTV…IKALYVNILP (86 aa)) form the PPIase FKBP-type domain.

This sequence belongs to the FKBP-type PPIase family. Tig subfamily.

The protein resides in the cytoplasm. It catalyses the reaction [protein]-peptidylproline (omega=180) = [protein]-peptidylproline (omega=0). Its function is as follows. Involved in protein export. Acts as a chaperone by maintaining the newly synthesized protein in an open conformation. Functions as a peptidyl-prolyl cis-trans isomerase. The sequence is that of Trigger factor from Leptospira borgpetersenii serovar Hardjo-bovis (strain JB197).